The sequence spans 358 residues: Probable protein phosphatase 2C 68 (358 aa).

A PPM-type phosphatase domain is found at 74 to 352 (RHGAASVAGR…DNISVVVVDL (279 aa)). The Mn(2+) site is built by D117, G118, D298, and D343.

Belongs to the PP2C family. It depends on Mg(2+) as a cofactor. Requires Mn(2+) as cofactor.

Its subcellular location is the nucleus. The protein localises to the cytoplasm. The protein resides in the cytosol. It catalyses the reaction O-phospho-L-seryl-[protein] + H2O = L-seryl-[protein] + phosphate. The enzyme catalyses O-phospho-L-threonyl-[protein] + H2O = L-threonyl-[protein] + phosphate. Its function is as follows. Involved in the regulation of abiotic stress responses. Acts as a negative regulator of abscisic acid (ABA) signaling and positive regulator of abiotic stress signaling. May be involved in panicle development. The protein is Probable protein phosphatase 2C 68 of Oryza sativa subsp. japonica (Rice).